Consider the following 689-residue polypeptide: Choline transporter-like 1 (689 aa).

A helical membrane pass occupies residues 23–43 (IFWLVVYILFWIALLVIAVFS). Residue Asn-134 is glycosylated (N-linked (GlcNAc...) asparagine). 2 helical membrane passes run 199–219 (FSDI…SLIF) and 233–255 (IISW…VLWW). N-linked (GlcNAc...) asparagine glycosylation occurs at Asn-279. A run of 2 helical transmembrane segments spans residues 283-303 (IYVL…VIYY) and 333-353 (VLAF…IVCL). 2 N-linked (GlcNAc...) asparagine glycosylation sites follow: Asn-375 and Asn-389. 4 consecutive transmembrane segments (helical) span residues 412-432 (IYII…QLVI), 461-481 (LGSV…RLIL), 562-582 (LVLF…SILM), and 591-611 (FYMA…HIVL).

It belongs to the CTL (choline transporter-like) family.

It localises to the membrane. In Aedes aegypti (Yellowfever mosquito), this protein is Choline transporter-like 1.